A 305-amino-acid chain; its full sequence is P2Y purinoceptor 14 (305 aa).

Residues 1-29 (MDNTTTTEPPKQPCTRNTLITQQIIPMLY) lie on the Extracellular side of the membrane. N3 is a glycosylation site (N-linked (GlcNAc...) asparagine). Residues 30–50 (CVVFITGVLLNGISGWIFFYV) traverse the membrane as a helical segment. The Cytoplasmic portion of the chain corresponds to 51–55 (PSSKS). A helical membrane pass occupies residues 56–76 (FIIYLKNIVVADFLMGLTFPF). Topologically, residues 77 to 96 (KVLSDSGLGPWQLNVFVFRV) are extracellular. Residues 97-117 (SAVIFYVNMYVSIAFFGLISF) traverse the membrane as a helical segment. The Cytoplasmic segment spans residues 118–139 (DRYYKIVKPLLVSIVQSVNYSK). A helical membrane pass occupies residues 140–160 (VLSVLVWVLMLLLAVPNIILT). N161 carries N-linked (GlcNAc...) asparagine glycosylation. Over 161–188 (NQSVKDVTNIQCMELKNELGRKWHKASN) the chain is Extracellular. A helical transmembrane segment spans residues 189–209 (YVFVSIFWIVFLLLTVFYMAI). Topologically, residues 210-234 (TRKIFKSHLKSRKNSISVKRKSSRN) are cytoplasmic. A helical transmembrane segment spans residues 235-255 (IFSIVLAFVACFAPYHVARIP). At 256-278 (YTKSQTEGHYSCQAKETLLYTKE) the chain is on the extracellular side. Residues 279–299 (FTLLLSAANVCLDPISISSYA) form a helical membrane-spanning segment. Topologically, residues 300 to 305 (SRLEKS) are cytoplasmic.

This sequence belongs to the G-protein coupled receptor 1 family.

It is found in the cell membrane. Its function is as follows. Receptor for UDP-glucose coupled to G-proteins. This Rattus norvegicus (Rat) protein is P2Y purinoceptor 14 (P2ry14).